The chain runs to 290 residues: Bifunctional protein FolD (290 aa).

NADP(+) contacts are provided by residues 169–171 (GAS), isoleucine 194, and isoleucine 235.

This sequence belongs to the tetrahydrofolate dehydrogenase/cyclohydrolase family. As to quaternary structure, homodimer.

It catalyses the reaction (6R)-5,10-methylene-5,6,7,8-tetrahydrofolate + NADP(+) = (6R)-5,10-methenyltetrahydrofolate + NADPH. The catalysed reaction is (6R)-5,10-methenyltetrahydrofolate + H2O = (6R)-10-formyltetrahydrofolate + H(+). It participates in one-carbon metabolism; tetrahydrofolate interconversion. Functionally, catalyzes the oxidation of 5,10-methylenetetrahydrofolate to 5,10-methenyltetrahydrofolate and then the hydrolysis of 5,10-methenyltetrahydrofolate to 10-formyltetrahydrofolate. The chain is Bifunctional protein FolD from Helicobacter pylori (strain HPAG1).